We begin with the raw amino-acid sequence, 420 residues long: Pre-mRNA-splicing factor RBM22 (420 aa).

Alanine 2 carries the N-acetylalanine modification. Residues serine 4 and serine 102 each carry the phosphoserine modification. Residues lysine 139 and lysine 149 each participate in a glycyl lysine isopeptide (Lys-Gly) (interchain with G-Cter in SUMO2) cross-link. A C3H1-type zinc finger spans residues 159–186 (RNRPHICSFWVKGECKRGEECPYRHEKP). Lysine 212 carries the N6-acetyllysine modification. The 74-residue stretch at 232–305 (TTLYVGGLGD…RRLNVKWGRS (74 aa)) folds into the RRM domain. Lysine 290 participates in a covalent cross-link: Glycyl lysine isopeptide (Lys-Gly) (interchain with G-Cter in SUMO2). Disordered stretches follow at residues 303–343 (GRSQ…AAEE) and 372–420 (APPP…HSSP). Residues 309–318 (RGKEKEKDGT) are compositionally biased toward basic and acidic residues.

This sequence belongs to the SLT11 family. As to quaternary structure, component of the pre-catalytic and catalytic spliceosome complexes. Component of the postcatalytic spliceosome P complex. Interacts with PDCD6; the interaction induces translocation of PDCD6 in the cytoplasm. Interacts with PPIL1.

It is found in the nucleus. The protein localises to the cytoplasm. In terms of biological role, required for pre-mRNA splicing as component of the activated spliceosome. Involved in the first step of pre-mRNA splicing. Binds directly to the internal stem-loop (ISL) domain of the U6 snRNA and to the pre-mRNA intron near the 5' splice site during the activation and catalytic phases of the spliceosome cycle. Involved in both translocations of the nuclear SLU7 to the cytoplasm and the cytosolic calcium-binding protein PDCD6 to the nucleus upon cellular stress responses. The polypeptide is Pre-mRNA-splicing factor RBM22 (RBM22) (Homo sapiens (Human)).